The chain runs to 168 residues: NADH-quinone oxidoreductase subunit B (168 aa).

[4Fe-4S] cluster-binding residues include Cys37, Cys38, Cys103, and Cys132.

This sequence belongs to the complex I 20 kDa subunit family. As to quaternary structure, NDH-1 is composed of 14 different subunits. Subunits NuoB, C, D, E, F, and G constitute the peripheral sector of the complex. [4Fe-4S] cluster serves as cofactor.

It localises to the cell inner membrane. It catalyses the reaction a quinone + NADH + 5 H(+)(in) = a quinol + NAD(+) + 4 H(+)(out). NDH-1 shuttles electrons from NADH, via FMN and iron-sulfur (Fe-S) centers, to quinones in the respiratory chain. The immediate electron acceptor for the enzyme in this species is believed to be ubiquinone. Couples the redox reaction to proton translocation (for every two electrons transferred, four hydrogen ions are translocated across the cytoplasmic membrane), and thus conserves the redox energy in a proton gradient. The sequence is that of NADH-quinone oxidoreductase subunit B from Campylobacter fetus subsp. fetus (strain 82-40).